A 330-amino-acid polypeptide reads, in one-letter code: D-lactate dehydrogenase (330 aa).

NAD(+) is bound by residues 156–157, D176, 206–207, 233–235, and D259; these read RI, VP, and AAR. R235 is a catalytic residue. E264 is an active-site residue. H296 acts as the Proton donor in catalysis.

It belongs to the D-isomer specific 2-hydroxyacid dehydrogenase family.

It catalyses the reaction (R)-lactate + NAD(+) = pyruvate + NADH + H(+). This chain is D-lactate dehydrogenase (ldhD), found in Staphylococcus aureus (strain Mu50 / ATCC 700699).